A 384-amino-acid polypeptide reads, in one-letter code: Lipid-A-disaccharide synthase (384 aa).

It belongs to the LpxB family.

The enzyme catalyses a lipid X + a UDP-2-N,3-O-bis[(3R)-3-hydroxyacyl]-alpha-D-glucosamine = a lipid A disaccharide + UDP + H(+). It functions in the pathway bacterial outer membrane biogenesis; LPS lipid A biosynthesis. In terms of biological role, condensation of UDP-2,3-diacylglucosamine and 2,3-diacylglucosamine-1-phosphate to form lipid A disaccharide, a precursor of lipid A, a phosphorylated glycolipid that anchors the lipopolysaccharide to the outer membrane of the cell. The polypeptide is Lipid-A-disaccharide synthase (Gloeothece citriformis (strain PCC 7424) (Cyanothece sp. (strain PCC 7424))).